Here is a 128-residue protein sequence, read N- to C-terminus: Lymphocyte antigen 6D (128 aa).

The N-terminal stretch at 1-20 (MRTALLLLAALAVATGPALT) is a signal peptide. Residues 21–108 (LRCHVCTSSS…AAPTRTALAH (88 aa)) enclose the UPAR/Ly6 domain. Disulfide bonds link C23–C45, C26–C32, C38–C63, C67–C86, and C87–C92. The GPI-anchor amidated asparagine moiety is linked to residue N98. Positions 99-128 (AAPTRTALAHSALSLGLALSLLAVILAPSL) are cleaved as a propeptide — removed in mature form.

In terms of tissue distribution, expressed exclusively at the outer cell surface of transitional epithelia and the keratinocyte of stratified squamous epithelia.

Its subcellular location is the cell membrane. Functionally, may act as a specification marker at earliest stage specification of lymphocytes between B- and T-cell development. Marks the earliest stage of B-cell specification. The polypeptide is Lymphocyte antigen 6D (LY6D) (Homo sapiens (Human)).